Here is a 300-residue protein sequence, read N- to C-terminus: Beta-lactamase (300 aa).

The N-terminal stretch at 1 to 29 (MTMFKTTFRQTATIAVSLISLLVSPMLWA) is a signal peptide. Residue Ser75 is the Acyl-ester intermediate of the active site. 239–241 (KTG) is a substrate binding site.

It belongs to the class-A beta-lactamase family. As to quaternary structure, monomer.

It catalyses the reaction a beta-lactam + H2O = a substituted beta-amino acid. Functionally, hydrolyzes broad-spectrum beta-lactam antibiotics. Active against cephalosporins such as cefuroxime and cefotaxime. This chain is Beta-lactamase (blaB), found in Proteus vulgaris.